The following is a 650-amino-acid chain: Probable protein phosphatase 2C 36 (650 aa).

Residues 146-166 (SGKKTKEKAKLKKSGSKSFTK) form a disordered region. Positions 148–166 (KKTKEKAKLKKSGSKSFTK) are enriched in basic residues. Positions 239–641 (ESALEEPKIQ…DDVSVIVISL (403 aa)) constitute a PPM-type phosphatase domain. Mn(2+) is bound by residues D276, G277, D569, and D632.

Belongs to the PP2C family. Mg(2+) serves as cofactor. Requires Mn(2+) as cofactor.

The protein resides in the nucleus. The enzyme catalyses O-phospho-L-seryl-[protein] + H2O = L-seryl-[protein] + phosphate. The catalysed reaction is O-phospho-L-threonyl-[protein] + H2O = L-threonyl-[protein] + phosphate. The chain is Probable protein phosphatase 2C 36 (PLL3) from Arabidopsis thaliana (Mouse-ear cress).